The following is a 1073-amino-acid chain: Probable nuclear hormone receptor HR38 (1073 aa).

Disordered regions lie at residues 55-87 (NLNAPTHQQSHTSHLQHAQQHQTHQQHPLLPPP), 150-185 (TPAPPATEPRKIKPLGAGKLKVGKTDSNSDSNSNCD), 263-326 (TQTA…LVSP), 437-458 (ALHAQQQQQQQQQQQQQQQQHQ), 492-514 (KYNSSSGSSPQQASSSSTAAPTP), 529-579 (PPLS…NSGG), and 618-640 (GQQQQQQQQSYQQHNYNSHNGER). Composition is skewed to low complexity over residues 59–82 (PTHQQSHTSHLQHAQQHQTHQQHP), 175–185 (DSNSDSNSNCD), and 263–277 (TQTASTTTTTSASAA). A compositionally biased stretch (basic residues) spans 279–291 (HHQHHNHLLHQQH). 3 stretches are compositionally biased toward low complexity: residues 292 to 326 (HNQQQQQQQQQQQQQQQQQQQEHLQQQHQQQLVSP), 441 to 458 (QQQQQQQQQQQQQQQQHQ), and 495 to 514 (SSSGSSPQQASSSSTAAPTP). Low complexity predominate over residues 619–636 (QQQQQQQQSYQQHNYNSH). Positions 741–816 (SQLCAVCGDT…VGMVKEVVRT (76 aa)) form a DNA-binding region, nuclear receptor. NR C4-type zinc fingers lie at residues 744–764 (CAVCGDTAACQHYGVRTCEGC) and 780–804 (CLADKNCPVDKRRRNRCQFCRFQKC). The disordered stretch occupies residues 819-841 (LKGRRGRLPSKPKSPQESPPSPP). Residues 840–1070 (PPISLITALV…ALIENMFVTT (231 aa)) form the NR LBD domain.

The protein belongs to the nuclear hormone receptor family. NR4 subfamily. In terms of assembly, forms a heterodimer with USP. As to expression, ubiquitously expressed in preblastoderm embryos, specifically in central nervous system and intestinal tract. Highly expressed in third instar larval imaginal disks and brain complexes, but not in ovaries.

The protein resides in the nucleus. Its function is as follows. Binds to NGFI-B response elements. Plays an important role in late stages of epidermal metamorphosis. In Drosophila melanogaster (Fruit fly), this protein is Probable nuclear hormone receptor HR38 (Hr38).